Here is a 306-residue protein sequence, read N- to C-terminus: Pantothenate kinase (306 aa).

91-98 (GSVAVGKS) is an ATP binding site.

The protein belongs to the prokaryotic pantothenate kinase family.

The protein localises to the cytoplasm. It carries out the reaction (R)-pantothenate + ATP = (R)-4'-phosphopantothenate + ADP + H(+). It participates in cofactor biosynthesis; coenzyme A biosynthesis; CoA from (R)-pantothenate: step 1/5. This chain is Pantothenate kinase, found in Streptococcus thermophilus (strain CNRZ 1066).